Consider the following 300-residue polypeptide: Ribosomal protein L11 methyltransferase (300 aa).

Residues T152, G173, D195, and N234 each contribute to the S-adenosyl-L-methionine site.

Belongs to the methyltransferase superfamily. PrmA family.

It localises to the cytoplasm. It catalyses the reaction L-lysyl-[protein] + 3 S-adenosyl-L-methionine = N(6),N(6),N(6)-trimethyl-L-lysyl-[protein] + 3 S-adenosyl-L-homocysteine + 3 H(+). Functionally, methylates ribosomal protein L11. The chain is Ribosomal protein L11 methyltransferase from Burkholderia multivorans (strain ATCC 17616 / 249).